The sequence spans 337 residues: Phosphatidate cytidylyltransferase, mitochondrial (337 aa).

Belongs to the TAM41 family. It depends on Mg(2+) as a cofactor.

The protein localises to the mitochondrion inner membrane. It catalyses the reaction a 1,2-diacyl-sn-glycero-3-phosphate + CTP + H(+) = a CDP-1,2-diacyl-sn-glycerol + diphosphate. Its pathway is phospholipid metabolism; CDP-diacylglycerol biosynthesis; CDP-diacylglycerol from sn-glycerol 3-phosphate: step 3/3. Functionally, catalyzes the conversion of phosphatidic acid (PA) to CDP-diacylglycerol (CDP-DAG), an essential intermediate in the synthesis of phosphatidylglycerol, cardiolipin and phosphatidylinositol. This is Phosphatidate cytidylyltransferase, mitochondrial (Tamm41) from Mus musculus (Mouse).